The following is a 4128-amino-acid chain: DNA-dependent protein kinase catalytic subunit (4128 aa).

Position 117 is an N6-acetyllysine (Lys-117). The HEAT 1 repeat unit spans residues Asp-288–Ile-323. Residues Ser-511, Ser-686, Ser-840, and Ser-891 each carry the phosphoserine modification. 2 HEAT repeats span residues Gln-1001–Ser-1037 and Pro-1050–Phe-1086. Ser-1062 carries the phosphoserine modification. Lys-1206 bears the N6-acetyllysine mark. An interaction with C1D region spans residues Leu-1501 to Leu-1536. The segment at Leu-1501 to Leu-1536 is leucine-zipper. The stretch at Pro-1720–Pro-1753 is one TPR 1 repeat. The residue at position 1967 (Lys-1967) is an N6-acetyllysine. The tract at residues Tyr-2049–Ser-2071 is disordered. Ser-2053 is modified (phosphoserine; by autocatalysis). A compositionally biased stretch (basic and acidic residues) spans Gln-2054–Asp-2070. An N6-acetyllysine modification is found at Lys-2255. Residues Leu-2432–Glu-3213 form a KIP-binding region. Phosphothreonine is present on Thr-2531. Position 2605 is a phosphothreonine; by autocatalysis (Thr-2605). Ser-2608 carries the phosphoserine; by autocatalysis modification. Positions Thr-2614–Gln-2635 are disordered. Phosphothreonine; by autocatalysis occurs at positions 2634 and 2643. Residues Glu-2738–Gln-2766 form a may split the end of the DNA molecule, with the two strands separating around the region region. Residues Pro-2907–Ser-3539 form the FAT domain. TPR repeat units lie at residues Val-2921–Thr-2954 and Asn-2956–Val-2983. A Phosphoserine modification is found at Ser-3206. Residues Lys-3241, Lys-3260, Lys-3638, and Lys-3642 each carry the N6-acetyllysine modification. In terms of domain architecture, PI3K/PI4K catalytic spans Phe-3722–Gly-4053. Residues Val-3728 to Lys-3734 form a G-loop region. Residues Ser-3731 and Ser-3821 each carry the phosphoserine modification. A catalytic loop region spans residues Gly-3919–Asn-3927. The activation loop stretch occupies residues Gly-3939–Thr-3964. At Ser-4026 the chain carries Phosphoserine. Residues Ser-4096 to Met-4128 form the FATC domain.

The protein belongs to the PI3/PI4-kinase family. DNA-PK is a heterotrimer of PRKDC and the Ku dimer (composed of XRCC6/Ku70 and XRCC5/Ku86). Formation of this complex may be promoted by interaction with ILF3. Component of the core long-range non-homologous end joining (NHEJ) complex (also named DNA-PK complex) composed of PRKDC, LIG4, XRCC4, XRCC6/Ku70, XRCC5/Ku86 and NHEJ1/XLF. Additional component of the NHEJ complex includes PAXX. Following autophosphorylation, PRKDC dissociates from DNA. Interacts with DNA-PKcs-interacting protein (KIP) with the region upstream the kinase domain. PRKDC alone also interacts with and phosphorylates DCLRE1C, thereby activating the latent endonuclease activity of this protein. Interacts with C1D. Interacts with TTI1 and TELO2. Interacts with CIB1. Interacts with SETX. Interacts with NR4A3; the DNA-dependent protein kinase complex DNA-PK phosphorylates and activates NR4A3 and prevents NR4A3 ubiquitination and degradation. Interacts with BRAT1. Part of the HDP-RNP complex composed of at least HEXIM1, PRKDC, XRCC5, XRCC6, paraspeckle proteins (SFPQ, NONO, PSPC1, RBM14, and MATR3) and NEAT1 RNA. Interacts with KAT5. Autophosphorylated at two clusters, the T2609 cluster and the S2056 cluster. Autophosphorylated on Ser-2053, Thr-2605, Thr-2634 and Thr-2643. Ser-2053 and Thr-2605 are DNA damage-inducible phosphorylation sites (inducible with ionizing radiation, IR) dephosphorylated by PPP5C. Autophosphorylation induces a conformational change that leads to remodeling of the DNA-PK complex, requisite for efficient end processing and DNA repair. Autophosphorylation in trans within DNA-PK complexes loaded on DNA ends leads to the dissociation of PRKDC from DNA and the transition into the short-range NHEJ complex. Autophosphorylation of the T2609 cluster is required for hematopoietic development and protein synthesis in erythrocytes precursors. Post-translationally, S-nitrosylated by GAPDH. In terms of processing, polyubiquitinated by RNF144A, leading to proteasomal degradation.

The protein resides in the nucleus. The protein localises to the nucleolus. Its subcellular location is the cytoplasm. It is found in the cytosol. It carries out the reaction L-seryl-[protein] + ATP = O-phospho-L-seryl-[protein] + ADP + H(+). It catalyses the reaction L-threonyl-[protein] + ATP = O-phospho-L-threonyl-[protein] + ADP + H(+). Activity seems to be attenuated by autophosphorylation. Binding to the SL1 region of U3 small nucleolar RNA promotes auto-phosphorylation activity. Inhibited by wortmannin. In terms of biological role, serine/threonine-protein kinase that acts as a molecular sensor for DNA damage. Involved in DNA non-homologous end joining (NHEJ) required for double-strand break (DSB) repair and V(D)J recombination. Must be bound to DNA to express its catalytic properties. Promotes processing of hairpin DNA structures in V(D)J recombination by activation of the hairpin endonuclease artemis (DCLRE1C). Recruited by XRCC5 and XRCC6 to DNA ends and is required to (1) protect and align broken ends of DNA, thereby preventing their degradation, (2) and sequester the DSB for repair by NHEJ. Acts as a scaffold protein to aid the localization of DNA repair proteins to the site of damage. The assembly of the DNA-PK complex at DNA ends is also required for the NHEJ ligation step. Found at the ends of chromosomes, suggesting a further role in the maintenance of telomeric stability and the prevention of chromosomal end fusion. Also involved in modulation of transcription. As part of the DNA-PK complex, involved in the early steps of ribosome assembly by promoting the processing of precursor rRNA into mature 18S rRNA in the small-subunit processome. Binding to U3 small nucleolar RNA, recruits PRKDC and XRCC5/Ku86 to the small-subunit processome. Recognizes the substrate consensus sequence [ST]-Q. Phosphorylates 'Ser-139' of histone variant H2AX, thereby regulating DNA damage response mechanism. Phosphorylates ASF1A, DCLRE1C, c-Abl/ABL1, histone H1, HSPCA, c-jun/JUN, p53/TP53, PARP1, POU2F1, DHX9, FH, SRF, NHEJ1/XLF, XRCC1, XRCC4, XRCC5, XRCC6, WRN, MYC and RFA2. Can phosphorylate C1D not only in the presence of linear DNA but also in the presence of supercoiled DNA. Ability to phosphorylate p53/TP53 in the presence of supercoiled DNA is dependent on C1D. Acts as a regulator of the phosphatidylinositol 3-kinase/protein kinase B signal transduction by mediating phosphorylation of 'Ser-473' of protein kinase B (PKB/AKT1, PKB/AKT2, PKB/AKT3), promoting their activation. Contributes to the determination of the circadian period length by antagonizing phosphorylation of CRY1 'Ser-588' and increasing CRY1 protein stability, most likely through an indirect mechanism. Plays a role in the regulation of DNA virus-mediated innate immune response by assembling into the HDP-RNP complex, a complex that serves as a platform for IRF3 phosphorylation and subsequent innate immune response activation through the cGAS-STING pathway. Also regulates the cGAS-STING pathway by catalyzing phosphorylation of CGAS, thereby impairing CGAS oligomerization and activation. Also regulates the cGAS-STING pathway by mediating phosphorylation of PARP1. This is DNA-dependent protein kinase catalytic subunit (Prkdc) from Mus musculus (Mouse).